The chain runs to 357 residues: 3-isopropylmalate dehydrogenase (357 aa).

NAD(+) is bound at residue Gly-76 to Glu-89. 4 residues coordinate substrate: Arg-96, Arg-106, Arg-134, and Asp-224. Asp-224, Asp-248, and Asp-252 together coordinate Mg(2+). Gly-282 to Asn-294 lines the NAD(+) pocket.

It belongs to the isocitrate and isopropylmalate dehydrogenases family. LeuB type 1 subfamily. In terms of assembly, homodimer. Requires Mg(2+) as cofactor. It depends on Mn(2+) as a cofactor.

The protein resides in the cytoplasm. The catalysed reaction is (2R,3S)-3-isopropylmalate + NAD(+) = 4-methyl-2-oxopentanoate + CO2 + NADH. It functions in the pathway amino-acid biosynthesis; L-leucine biosynthesis; L-leucine from 3-methyl-2-oxobutanoate: step 3/4. Functionally, catalyzes the oxidation of 3-carboxy-2-hydroxy-4-methylpentanoate (3-isopropylmalate) to 3-carboxy-4-methyl-2-oxopentanoate. The product decarboxylates to 4-methyl-2 oxopentanoate. This is 3-isopropylmalate dehydrogenase from Xylella fastidiosa (strain Temecula1 / ATCC 700964).